The following is a 447-amino-acid chain: Tubulin beta-1 chain (447 aa).

Positions 11, 69, 138, 142, 143, 144, 204, and 226 each coordinate GTP. A Mg(2+)-binding site is contributed by Glu69.

This sequence belongs to the tubulin family. Dimer of alpha and beta chains. A typical microtubule is a hollow water-filled tube with an outer diameter of 25 nm and an inner diameter of 15 nM. Alpha-beta heterodimers associate head-to-tail to form protofilaments running lengthwise along the microtubule wall with the beta-tubulin subunit facing the microtubule plus end conferring a structural polarity. Microtubules usually have 13 protofilaments but different protofilament numbers can be found in some organisms and specialized cells. Mg(2+) serves as cofactor.

It is found in the cytoplasm. Its subcellular location is the cytoskeleton. Its function is as follows. Tubulin is the major constituent of microtubules, a cylinder consisting of laterally associated linear protofilaments composed of alpha- and beta-tubulin heterodimers. Microtubules grow by the addition of GTP-tubulin dimers to the microtubule end, where a stabilizing cap forms. Below the cap, tubulin dimers are in GDP-bound state, owing to GTPase activity of alpha-tubulin. The chain is Tubulin beta-1 chain from Geotrichum candidum (Oospora lactis).